Reading from the N-terminus, the 374-residue chain is Probable quinol oxidase subunit 2 (374 aa).

An N-terminal signal peptide occupies residues 1–19; the sequence is MSKFKSLLLMFGTLILLSG. C20 carries N-palmitoyl cysteine lipidation. A lipid anchor (S-diacylglycerol cysteine) is attached at C20. The next 2 helical transmembrane spans lie at 43–63 and 82–102; these read SIIFMLVIVAVVLTMFAIFIF and IETIWFVVPIIIVIALSIPTV. Positions 321–374 are disordered; the sequence is MKPMILGNNDPYDNEFKKEEDHNSKEMEKISKSAKDENASKFGSKADNDHGGGH. The span at 334–374 shows a compositional bias: basic and acidic residues; it reads NEFKKEEDHNSKEMEKISKSAKDENASKFGSKADNDHGGGH.

The protein belongs to the cytochrome c oxidase subunit 2 family.

It is found in the cell membrane. It carries out the reaction 2 a quinol + O2 = 2 a quinone + 2 H2O. In terms of biological role, catalyzes quinol oxidation with the concomitant reduction of oxygen to water. Subunit II transfers the electrons from a quinol to the binuclear center of the catalytic subunit I. The chain is Probable quinol oxidase subunit 2 (qoxA) from Staphylococcus haemolyticus (strain JCSC1435).